We begin with the raw amino-acid sequence, 510 residues long: ATP synthase subunit alpha (510 aa).

170-177 (GDRQTGKT) contacts ATP.

Belongs to the ATPase alpha/beta chains family. As to quaternary structure, F-type ATPases have 2 components, CF(1) - the catalytic core - and CF(0) - the membrane proton channel. CF(1) has five subunits: alpha(3), beta(3), gamma(1), delta(1), epsilon(1). CF(0) has three main subunits: a(1), b(2) and c(9-12). The alpha and beta chains form an alternating ring which encloses part of the gamma chain. CF(1) is attached to CF(0) by a central stalk formed by the gamma and epsilon chains, while a peripheral stalk is formed by the delta and b chains.

It localises to the cell inner membrane. It carries out the reaction ATP + H2O + 4 H(+)(in) = ADP + phosphate + 5 H(+)(out). In terms of biological role, produces ATP from ADP in the presence of a proton gradient across the membrane. The alpha chain is a regulatory subunit. This is ATP synthase subunit alpha from Maricaulis maris (strain MCS10) (Caulobacter maris).